The following is a 59-amino-acid chain: UPF0434 protein Rsph17029_0141 (59 aa).

This sequence belongs to the UPF0434 family.

The polypeptide is UPF0434 protein Rsph17029_0141 (Cereibacter sphaeroides (strain ATCC 17029 / ATH 2.4.9) (Rhodobacter sphaeroides)).